The primary structure comprises 78 residues: DNA-directed RNA polymerase subunit Rpo5 (78 aa).

It belongs to the archaeal Rpo5/eukaryotic RPB5 RNA polymerase subunit family. As to quaternary structure, part of the RNA polymerase complex.

The protein resides in the cytoplasm. The catalysed reaction is RNA(n) + a ribonucleoside 5'-triphosphate = RNA(n+1) + diphosphate. DNA-dependent RNA polymerase (RNAP) catalyzes the transcription of DNA into RNA using the four ribonucleoside triphosphates as substrates. The sequence is that of DNA-directed RNA polymerase subunit Rpo5 from Methanosarcina barkeri (strain Fusaro / DSM 804).